Here is a 286-residue protein sequence, read N- to C-terminus: PTS system mannose-specific EIID component (286 aa).

Position 1 is an N-formylmethionine (M1). Residues M1–T17 are Cytoplasmic-facing. The PTS EIID domain occupies K14 to L284. An intramembrane segment occupies Q18–R55. At L56 to E62 the chain is on the cytoplasmic side. The stretch at A63–Q95 is an intramembrane region. Residues R96 to D103 are Cytoplasmic-facing. Over D104–M143 the chain traverses the membrane. Over S144–L147 the chain is Periplasmic. The segment at L148–G176 is a transmembrane helix. Residues I177–G186 are Cytoplasmic-facing. Over F187–H212 the chain traverses the membrane. The Periplasmic portion of the chain corresponds to V213–G244. A membrane pass occupies residues L245–L258. At R259 to P264 the chain is on the cytoplasmic side. The segment at L265–L283 is a transmembrane helix. Over L284 to L286 the chain is Periplasmic.

In terms of assembly, homotrimer of protomers that are composed of two subunits, IIC and IID.

The protein localises to the cell inner membrane. The phosphoenolpyruvate-dependent sugar phosphotransferase system (sugar PTS), a major carbohydrate active transport system, catalyzes the phosphorylation of incoming sugar substrates concomitantly with their translocation across the cell membrane. The enzyme II ManXYZ PTS system is involved in mannose transport. The polypeptide is PTS system mannose-specific EIID component (manZ) (Escherichia coli O6:H1 (strain CFT073 / ATCC 700928 / UPEC)).